Consider the following 806-residue polypeptide: ATP-dependent zinc metalloprotease FTSH 9, chloroplastic (806 aa).

The transit peptide at 1-62 (MTSIELLSPL…SSIQLPQSVP (62 aa)) directs the protein to the chloroplast. Positions 84 to 116 (SSRTIVNCQEGDQKASSSEGEGKTNKDKGRKQG) are disordered. 2 helical membrane passes run 133-153 (IIQA…MFVV) and 271-291 (GGFF…AGLL). 369–376 (GLPGTGKT) provides a ligand contact to ATP. Residue His-594 coordinates Zn(2+). Glu-595 is an active-site residue. Zn(2+)-binding residues include His-598 and Asp-677.

The protein in the N-terminal section; belongs to the AAA ATPase family. This sequence in the C-terminal section; belongs to the peptidase M41 family. Requires Zn(2+) as cofactor.

Its subcellular location is the plastid. It is found in the chloroplast thylakoid membrane. Probable ATP-dependent zinc metallopeptidase. This Arabidopsis thaliana (Mouse-ear cress) protein is ATP-dependent zinc metalloprotease FTSH 9, chloroplastic (FTSH9).